The chain runs to 477 residues: Bifunctional protein HldE (477 aa).

The ribokinase stretch occupies residues methionine 1–threonine 318. Lysine 179 is subject to N6-acetyllysine. Residue asparagine 195–glutamate 198 participates in ATP binding. The active site involves aspartate 264. Positions methionine 344–glycine 477 are cytidylyltransferase.

In the N-terminal section; belongs to the carbohydrate kinase PfkB family. The protein in the C-terminal section; belongs to the cytidylyltransferase family. Homodimer.

The catalysed reaction is D-glycero-beta-D-manno-heptose 7-phosphate + ATP = D-glycero-beta-D-manno-heptose 1,7-bisphosphate + ADP + H(+). It carries out the reaction D-glycero-beta-D-manno-heptose 1-phosphate + ATP + H(+) = ADP-D-glycero-beta-D-manno-heptose + diphosphate. It functions in the pathway nucleotide-sugar biosynthesis; ADP-L-glycero-beta-D-manno-heptose biosynthesis; ADP-L-glycero-beta-D-manno-heptose from D-glycero-beta-D-manno-heptose 7-phosphate: step 1/4. The protein operates within nucleotide-sugar biosynthesis; ADP-L-glycero-beta-D-manno-heptose biosynthesis; ADP-L-glycero-beta-D-manno-heptose from D-glycero-beta-D-manno-heptose 7-phosphate: step 3/4. Functionally, catalyzes the phosphorylation of D-glycero-D-manno-heptose 7-phosphate at the C-1 position to selectively form D-glycero-beta-D-manno-heptose-1,7-bisphosphate. Its function is as follows. Catalyzes the ADP transfer from ATP to D-glycero-beta-D-manno-heptose 1-phosphate, yielding ADP-D-glycero-beta-D-manno-heptose. The polypeptide is Bifunctional protein HldE (Escherichia coli O81 (strain ED1a)).